Reading from the N-terminus, the 192-residue chain is Apoptosis regulator BAX (192 aa).

M1 is modified (N-acetylmethionine). A BH3 motif is present at residues 59 to 73 (LSECLKRIGDELDSN). Residues 98–118 (EMFSDGNFNWGRVVALFYFAS) carry the BH1 motif. K128 participates in a covalent cross-link: Glycyl lysine isopeptide (Lys-Gly) (interchain with G-Cter in ubiquitin). The BH2 motif lies at 150 to 165 (GWIQDQGGWDGLLSYF). The chain crosses the membrane as a helical span at residues 172 to 192 (TVTIFVAGVLTASLTIWKKMG). Residue K190 forms a Glycyl lysine isopeptide (Lys-Gly) (interchain with G-Cter in ubiquitin) linkage.

The protein belongs to the Bcl-2 family. Homodimer. Forms higher oligomers under stress conditions. Forms heterooligomers with BAK. Interacts with BCL2L11. Interaction with BCL2L11 promotes BAX oligomerization and association with mitochondrial membranes, with subsequent release of cytochrome c. Forms heterodimers with BCL2, BCL2L1 isoform Bcl-X(L), BCL2L2, MCL1 and A1. Interacts with SH3GLB1. Interacts with SFN and YWHAZ; the interaction occurs in the cytoplasm. Under stress conditions, JNK-mediated phosphorylation of SFN and YWHAZ, releases BAX to mitochondria. Interacts with RNF144B, which regulates the ubiquitin-dependent stability of BAX. Interacts with CLU under stress conditions that cause a conformation change leading to BAX oligomerization and association with mitochondria. Does not interact with CLU in unstressed cells. Interacts with FAIM2/LFG2. Interacts with RTL10/BOP. Interacts (via a C-terminal 33 residues) with NOL3 (via CARD domain); inhibits BAX activation and translocation and consequently cytochrome c release from mitochondria. Interacts with GIMAP3/IAN4 and GIMAP5/IAN5; this interaction is increased, when cells initiate apoptosis upon IL2 withdrawal. Interacts with IRF3; the interaction is direct, increases upon Sendai virus infection and mediates the formation of the apoptosis complex TOMM70:HSP90AA1:IRF3:BAX. Interacts with MOAP1, facilitating BAX-dependent mitochondrial outer membrane permeabilization and apoptosis. Interacts with BCL2L10/BCL-B. Interacts with non-acetylated XRCC6/Ku70; this interaction leads to BAX sequestration in the cytosol, away from the mitochondria, preventing BAX-mediated apoptosis. Ubiquitinated in the absence of XRCC6/Ku70. Ubiquitinated on Lys-128 and Lys-190. 'Lys-63'-linked polyubiquitin chains on Lys-128 are removed by USP12.

The protein localises to the mitochondrion outer membrane. Its subcellular location is the cytoplasm. It localises to the nucleus. In terms of biological role, plays a role in the mitochondrial apoptotic process. Under normal conditions, BAX is largely cytosolic via constant retrotranslocation from mitochondria to the cytosol mediated by BCL2L1/Bcl-xL, which avoids accumulation of toxic BAX levels at the mitochondrial outer membrane (MOM). Under stress conditions, undergoes a conformation change that causes translocation to the mitochondrion membrane, leading to the release of cytochrome c that then triggers apoptosis. Promotes activation of CASP3, and thereby apoptosis. The chain is Apoptosis regulator BAX (BAX) from Bos taurus (Bovine).